The following is a 131-amino-acid chain: Histone H2B.2 (131 aa).

Residues 1 to 19 (MSAKAEKKPASKAPAEKKP) show a composition bias toward basic and acidic residues. Residues 1–38 (MSAKAEKKPASKAPAEKKPAAKKTAPSSDGKKRTKARK) are disordered. An N6-acetyllysine; alternate mark is found at Lys-7 and Lys-8. Glycyl lysine isopeptide (Lys-Gly) (interchain with G-Cter in SUMO); alternate cross-links involve residues Lys-7 and Lys-8. Ser-11 bears the Phosphoserine mark. An N6-acetyllysine modification is found at Lys-12. An N6-acetyllysine; alternate modification is found at Lys-17. Lys-17 is covalently cross-linked (Glycyl lysine isopeptide (Lys-Gly) (interchain with G-Cter in SUMO); alternate). A Glycyl lysine isopeptide (Lys-Gly) (interchain with G-Cter in SUMO) cross-link involves residue Lys-18. Lys-124 participates in a covalent cross-link: Glycyl lysine isopeptide (Lys-Gly) (interchain with G-Cter in ubiquitin).

This sequence belongs to the histone H2B family. In terms of assembly, the nucleosome is a histone octamer containing two molecules each of H2A, H2B, H3 and H4 assembled in one H3-H4 heterotetramer and two H2A-H2B heterodimers. The octamer wraps approximately 147 bp of DNA. Post-translationally, monoubiquitinated by the UBC2-BRE1 complex to form H2BK123ub1. H2BK123ub1 gives a specific tag for epigenetic transcriptional activation and is also prerequisite for H3K4me and H3K79me formation. H2BK123ub1 also modulates the formation of double-strand breaks during meiosis and is a prerequisite for DNA-damage checkpoint activation. In terms of processing, phosphorylated by STE20 to form H2BS10ph during progression through meiotic prophase. May be correlated with chromosome condensation. Acetylated by GCN5 to form H2BK11ac and H2BK16ac. H2BK16ac can also be formed by ESA1. Acetylation of N-terminal lysines and particularly formation of H2BK11acK16ac has a positive effect on transcription. Post-translationally, sumoylation to form H2BK6su or H2BK7su, and probably also H2BK16su or H2BK17su, occurs preferentially near the telomeres and represses gene transcription.

Its subcellular location is the nucleus. The protein localises to the chromosome. In terms of biological role, core component of nucleosome. Nucleosomes wrap and compact DNA into chromatin, limiting DNA accessibility to the cellular machineries which require DNA as a template. Histones thereby play a central role in transcription regulation, DNA repair, DNA replication and chromosomal stability. DNA accessibility is regulated via a complex set of post-translational modifications of histones, also called histone code, and nucleosome remodeling. The protein is Histone H2B.2 (HTB2) of Candida glabrata (strain ATCC 2001 / BCRC 20586 / JCM 3761 / NBRC 0622 / NRRL Y-65 / CBS 138) (Yeast).